Consider the following 196-residue polypeptide: ATP-dependent Clp protease proteolytic subunit (196 aa).

The active-site Nucleophile is the Ser99. The active site involves His124.

It belongs to the peptidase S14 family. In terms of assembly, fourteen ClpP subunits assemble into 2 heptameric rings which stack back to back to give a disk-like structure with a central cavity, resembling the structure of eukaryotic proteasomes.

The protein resides in the cytoplasm. The enzyme catalyses Hydrolysis of proteins to small peptides in the presence of ATP and magnesium. alpha-casein is the usual test substrate. In the absence of ATP, only oligopeptides shorter than five residues are hydrolyzed (such as succinyl-Leu-Tyr-|-NHMec, and Leu-Tyr-Leu-|-Tyr-Trp, in which cleavage of the -Tyr-|-Leu- and -Tyr-|-Trp bonds also occurs).. Cleaves peptides in various proteins in a process that requires ATP hydrolysis. Has a chymotrypsin-like activity. Plays a major role in the degradation of misfolded proteins. The chain is ATP-dependent Clp protease proteolytic subunit from Helicobacter hepaticus (strain ATCC 51449 / 3B1).